We begin with the raw amino-acid sequence, 234 residues long: MAPQDHASALRPAVGGWAELPFFETHWPRIEAALAQETRQILPPAHQRFAALERTPPESTRVVILGQDPYPTPGHAHGLSFSVEPDVTPLPRSLRNIYQEMRDDLGTCPETGDLRPWAAQGVLLLNTVLSVPAGEANGHKSLGWQELAHQVLDLSSRRPTAYVLWGNQAQKLESHIRPGDHLIVKTAHPSPLSARRGFFGSRVFSAINDWLTARGEPPITWADPRPAQGSIFDV.

Catalysis depends on Asp-68, which acts as the Proton acceptor.

The protein belongs to the uracil-DNA glycosylase (UDG) superfamily. UNG family.

It is found in the cytoplasm. The enzyme catalyses Hydrolyzes single-stranded DNA or mismatched double-stranded DNA and polynucleotides, releasing free uracil.. Its function is as follows. Excises uracil residues from the DNA which can arise as a result of misincorporation of dUMP residues by DNA polymerase or due to deamination of cytosine. The protein is Uracil-DNA glycosylase of Ruegeria sp. (strain TM1040) (Silicibacter sp.).